The following is a 466-amino-acid chain: MLRSTSTVTLFSGGGAKSPGTPSRRANVCRLRLTVPPENPVPQQTEKKIERKDQPPELSNGESTKRLPQGVVYGVVRRSDPNQQKEMVVYGWSTNQLKEEMNYIKDVRATLEKVRKRMYGDYDEMRQKIRQLTQDLSVSHAQQDYLDSHIQAQASALDSFNAMNAALASDSVGLQKTLVDVTLENSHIKDQIRHLQQTYEASMDKLREKQRQLEAAQMENQLLKMRVESSQEANAEVMREMTRKLYSQYEEKLQEAQRKHSAEKEVLLEETNSFLKAIEEANKKMEAAELSLEEKDQKIGELDRLIERMEKERHQLQLQLLEHETEMSGEMADSDKNRYQQLEEASASLRERIRHLDDMVHCQQKKVKQMVEEIESLKKKVQQKQLLILQLLEKISFLEGENNELQSRLDYLTETQPKTEVETREIGVGCDLLPSPTGRTREITMPSRSYTPYTRVLELSSKKTLT.

Residues Met1–Leu10 show a composition bias toward polar residues. The first 16 residues, Met1 to Ala16, serve as a signal peptide directing secretion. A disordered region spans residues Met1–Pro68. The span at Thr45–Pro55 shows a compositional bias: basic and acidic residues. Coiled coils occupy residues Asn95 to Ser137 and His187 to Thr415.

It belongs to the MYZAP family. Interacts with DSP, MPRIP and TJP1/ZO1. Interaction with MPRIP inhibits the activation of transcription factor SRF. Interacts with GRIN1. Interacts with DYNLL1. In terms of tissue distribution, detected in heart myocardium and lung.

It is found in the cytoplasm. The protein resides in the cytoskeleton. It localises to the cell membrane. The protein localises to the myofibril. Its subcellular location is the sarcomere. It is found in the i band. The protein resides in the z line. It localises to the cell junction. In terms of biological role, plays a role in cellular signaling via Rho-related GTP-binding proteins and activation of transcription factor SRF. Targets TJP1 to cell junctions. In cortical neurons, may play a role in glutaminergic signal transduction through interaction with the NMDA receptor subunit GRIN1. The chain is Myocardial zonula adherens protein (Myzap) from Mus musculus (Mouse).